The chain runs to 424 residues: Putative polyketide beta-ketoacyl synthase 2 (424 aa).

Residues Ser13–Arg416 enclose the Ketosynthase family 3 (KS3) domain.

This sequence belongs to the thiolase-like superfamily. Beta-ketoacyl-ACP synthases family.

Involved in developmentally regulated synthesis of a compound biosynthetically related to polyketide antibiotics which is essential for spore color in Streptomyces coelicolor. The polypeptide is Putative polyketide beta-ketoacyl synthase 2 (Streptomyces coelicolor (strain ATCC BAA-471 / A3(2) / M145)).